Consider the following 500-residue polypeptide: Serine carboxypeptidase 3 (500 aa).

Positions 1–21 are cleaved as a signal peptide; the sequence is MATARVSLILLVVVLAASACA. A propeptide spanning residues 22–73 is cleaved from the precursor; the sequence is EGLRLPRDAKFPAAQAERLIRSLNLLPKEAGPTGAGDVPSVAPGELLERRVT. Disulfide bonds link Cys126/Cys366, Cys294/Cys309, and Cys332/Cys337. The N-linked (GlcNAc...) asparagine glycan is linked to Asn144. Ser216 is a catalytic residue. Asp404 is a catalytic residue. A substrate-binding site is contributed by Cys407. His461 is a catalytic residue. A propeptide spanning residues 485 to 500 is cleaved from the precursor; sequence EEWLAELPEQPMYAAM.

This sequence belongs to the peptidase S10 family. In terms of assembly, monomer.

It catalyses the reaction Release of a C-terminal amino acid with broad specificity.. In Oryza sativa subsp. japonica (Rice), this protein is Serine carboxypeptidase 3 (CBP3).